The chain runs to 138 residues: Large ribosomal subunit protein bL17 (138 aa).

It belongs to the bacterial ribosomal protein bL17 family. As to quaternary structure, part of the 50S ribosomal subunit. Contacts protein L32.

The sequence is that of Large ribosomal subunit protein bL17 from Buchnera aphidicola subsp. Schizaphis graminum (strain Sg).